Consider the following 95-residue polypeptide: Large ribosomal subunit protein bL27 (95 aa).

Residues 1–24 form a disordered region; sequence MAHKKGTGSTRNGRDSNSQRLGVK. The segment covering 7–20 has biased composition (polar residues); the sequence is TGSTRNGRDSNSQR.

This sequence belongs to the bacterial ribosomal protein bL27 family.

The protein is Large ribosomal subunit protein bL27 of Trichodesmium erythraeum (strain IMS101).